Reading from the N-terminus, the 105-residue chain is DNA-binding transcriptional regulator BolA (105 aa).

Belongs to the BolA/IbaG family.

In terms of biological role, transcriptional regulator that plays an important role in general stress response. Has many effects on cell morphology, cell growth and cell division. Acts by regulating the transcription of many genes, including dacA (PBP-5), dacC (PBP-6), ampC and mreB. Probably involved in the coordination of genes that adapt the cell physiology in order to enhance cell adaptation and survival under stress conditions. Essential for normal cell morphology in stationary phase and under conditions of starvation. Also regulates a complex network of genes encoding proteins related to biofilm development, and negatively modulates flagellar biosynthesis and swimming capacity. Could be a motile/adhesive transcriptional switch, specifically involved in the transition between the planktonic and the attachment stage of biofilm formation. Overexpression produces round cell shape, impairs cell growth rate and induces biofilm development. The sequence is that of DNA-binding transcriptional regulator BolA from Escherichia coli (strain K12).